Here is a 232-residue protein sequence, read N- to C-terminus: MKIGIIGAMEEEVTLLRDKIENRQTCTMGGVEIYTGQLNGTEVALLKSGIGKVAAAMGATLLIDHFKPDVIINTGSAGGLAPTLKVGDIVVSDEARYHDADVTAFGYEYGQLPGCPAGFKADDKLIAAAEACIAEHNLNAVRGLIVSGDAFINGSVSLAKIRHNFPQAIAVEMEATAIAHVCHNFKVPFVVVRAISDVADQQSHISFDEFLAVAAKQSSLMVETLVQKLAHG.

The active-site Proton acceptor is glutamate 12. Substrate-binding positions include glycine 78, isoleucine 152, and 173–174; that span reads ME. The active-site Proton donor is the aspartate 197.

The protein belongs to the PNP/UDP phosphorylase family. MtnN subfamily. Homodimer.

The catalysed reaction is S-adenosyl-L-homocysteine + H2O = S-(5-deoxy-D-ribos-5-yl)-L-homocysteine + adenine. It catalyses the reaction S-methyl-5'-thioadenosine + H2O = 5-(methylsulfanyl)-D-ribose + adenine. It carries out the reaction 5'-deoxyadenosine + H2O = 5-deoxy-D-ribose + adenine. The protein operates within amino-acid biosynthesis; L-methionine biosynthesis via salvage pathway; S-methyl-5-thio-alpha-D-ribose 1-phosphate from S-methyl-5'-thioadenosine (hydrolase route): step 1/2. Catalyzes the irreversible cleavage of the glycosidic bond in both 5'-methylthioadenosine (MTA) and S-adenosylhomocysteine (SAH/AdoHcy) to adenine and the corresponding thioribose, 5'-methylthioribose and S-ribosylhomocysteine, respectively. Also cleaves 5'-deoxyadenosine, a toxic by-product of radical S-adenosylmethionine (SAM) enzymes, into 5-deoxyribose and adenine. Thus, is required for in vivo function of the radical SAM enzymes biotin synthase and lipoic acid synthase, that are inhibited by 5'-deoxyadenosine accumulation. This is 5'-methylthioadenosine/S-adenosylhomocysteine nucleosidase from Escherichia fergusonii (strain ATCC 35469 / DSM 13698 / CCUG 18766 / IAM 14443 / JCM 21226 / LMG 7866 / NBRC 102419 / NCTC 12128 / CDC 0568-73).